The following is a 919-amino-acid chain: Calcium-activated chloride channel regulator 4 (919 aa).

The first 21 residues, 1–21 (MGLFRGFVFLLVLCLLHQSNT), serve as a signal peptide directing secretion. The metalloprotease domain stretch occupies residues 45–199 (DEKIIEQIED…GISGRNRVYK (155 aa)). The N-linked (GlcNAc...) asparagine glycan is linked to asparagine 75. Histidine 155 is a binding site for Zn(2+). Glutamate 156 is an active-site residue. Residues histidine 159 and aspartate 166 each coordinate Zn(2+). Residues 306–476 (IVCLVLDKSG…NGLIDAFGAL (171 aa)) form the VWFA domain. N-linked (GlcNAc...) asparagine glycans are attached at residues asparagine 340, asparagine 504, asparagine 542, asparagine 588, asparagine 628, asparagine 811, asparagine 832, asparagine 837, and asparagine 852. The disordered stretch occupies residues 870 to 893 (ANPDDIDPTPTPTPTPTPDKSHNS). The helical transmembrane segment at 895–915 (VNISTLVLSVIGSVVIVNFIL) threads the bilayer.

This sequence belongs to the CLCR family. In terms of processing, the translation product is autoproteolytically cleaved by the metalloprotease domain in the endoplasmic reticulum into a N-terminal and a C-terminal products that remain physically associated with each other. The cleavage is necessary for calcium-activated chloride channel (CaCC) activation activity. As to expression, primarily expressed in the digestive tract, mainly in colon. Detected in smaller amounts in brain, urogenital organs, testis, and salivary and mammary glands. Highly expressed in the epithelial layer and submucosal gland of the inferior turbinate mucosa. Lower levels in the epithelial layer of nasal polyp.

It is found in the cell membrane. Its subcellular location is the apical cell membrane. The protein localises to the secreted. Functionally, may be involved in mediating calcium-activated chloride conductance. The sequence is that of Calcium-activated chloride channel regulator 4 (CLCA4) from Homo sapiens (Human).